Here is a 208-residue protein sequence, read N- to C-terminus: MTDVLVLYYSSYGHVETMAAAVAQGAREAGARVAVRRVPELVPEAVAERAGYKQDQRAPVATVGELADYDAIIIGTPTRFGNMASQMKNFLDQTGGLWAEDRLVGKVGSVFTSTGSQHGGQETTIQSTHTVLLHLGMIVVGLPYSFKGQMRMDEITGGSPYGASTLADDGDGGDRQPSANELDGARFQGRHVAEIAAALVAGRKREAA.

In terms of domain architecture, Flavodoxin-like spans 4–192 (VLVLYYSSYG…DGARFQGRHV (189 aa)). FMN contacts are provided by residues 10 to 15 (SSYGHV) and 78 to 80 (TRF). Y12 serves as a coordination point for NAD(+). W98 contributes to the substrate binding site. FMN contacts are provided by residues 113-119 (STGSQHG) and H134. The tract at residues 161–183 (YGASTLADDGDGGDRQPSANELD) is disordered.

This sequence belongs to the WrbA family. Requires FMN as cofactor.

It carries out the reaction a quinone + NADH + H(+) = a quinol + NAD(+). It catalyses the reaction a quinone + NADPH + H(+) = a quinol + NADP(+). The sequence is that of NAD(P)H dehydrogenase (quinone) from Paracoccus denitrificans (strain Pd 1222).